A 478-amino-acid chain; its full sequence is Putative malate transporter YflS (478 aa).

12 consecutive transmembrane segments (helical) span residues 12–31 (AVKL…IWFI), 41–57 (AWHL…GFIS), 64–81 (AIAI…TLSI), 96–118 (IVIA…ISYV), 187–209 (GFQG…PLIA), 222–244 (WTSW…PLVI), 277–296 (LSMV…GGSF), 300–319 (ATTT…VLTW), 332–354 (LTWF…VSWF), 364–386 (GFSW…YFFA), 398–420 (AFLA…LAFI), and 450–472 (WSIG…GLWW).

This sequence belongs to the SLC13A/DASS transporter (TC 2.A.47) family. DIT1 subfamily.

Its subcellular location is the cell membrane. Might be a malate transporter. The polypeptide is Putative malate transporter YflS (yflS) (Bacillus subtilis (strain 168)).